The primary structure comprises 253 residues: tRNA uridine(34) hydroxylase (253 aa).

Positions 127 to 221 (HGRPLVLLDT…YFEDVGGEGY (95 aa)) constitute a Rhodanese domain. C181 functions as the Cysteine persulfide intermediate in the catalytic mechanism.

The protein belongs to the TrhO family.

The enzyme catalyses uridine(34) in tRNA + AH2 + O2 = 5-hydroxyuridine(34) in tRNA + A + H2O. Functionally, catalyzes oxygen-dependent 5-hydroxyuridine (ho5U) modification at position 34 in tRNAs. This Xanthomonas campestris pv. campestris (strain B100) protein is tRNA uridine(34) hydroxylase.